The primary structure comprises 292 residues: UDP-N-acetylenolpyruvoylglucosamine reductase (292 aa).

An FAD-binding PCMH-type domain is found at 27-188; it reads KIGGPVRLFI…LRVGFRIIKG (162 aa). Residue Arg-166 is part of the active site. The active-site Proton donor is the Ser-217. Residue Glu-288 is part of the active site.

The protein belongs to the MurB family. FAD serves as cofactor.

It localises to the cytoplasm. The enzyme catalyses UDP-N-acetyl-alpha-D-muramate + NADP(+) = UDP-N-acetyl-3-O-(1-carboxyvinyl)-alpha-D-glucosamine + NADPH + H(+). The protein operates within cell wall biogenesis; peptidoglycan biosynthesis. Cell wall formation. The sequence is that of UDP-N-acetylenolpyruvoylglucosamine reductase from Thermosipho melanesiensis (strain DSM 12029 / CIP 104789 / BI429).